Consider the following 320-residue polypeptide: Small ribosomal subunit protein mS35 (320 aa).

Residues 24–63 (SVASPAAPRAGPRTASRSERPMRRKALPPRTEKMDTDQDW) form a disordered region.

The protein belongs to the mitochondrion-specific ribosomal protein mS35 family. As to quaternary structure, component of the mitochondrial ribosome small subunit (28S) which comprises a 12S rRNA and about 30 distinct proteins.

The protein localises to the mitochondrion. In Mus musculus (Mouse), this protein is Small ribosomal subunit protein mS35.